We begin with the raw amino-acid sequence, 160 residues long: MMFGHFAGYLGADPEERMTSKGKRVITLRLGVKTRVGMKDETVWCKCNIWHNRYDKMLPYLKKGSGVIVAGDISVESYMSKDGSPQSSLVISVDSLKFSPFGRNEGSRSPSLEDNHQQVGYESVSVGFEGEALDAEAIKDKDMYAGYGQEQQYVCEDVPF.

In terms of domain architecture, SSB spans methionine 1–proline 100.

Homotetramer.

The polypeptide is Single-stranded DNA-binding protein (ssb) (Chlamydia pneumoniae (Chlamydophila pneumoniae)).